A 157-amino-acid polypeptide reads, in one-letter code: Phosphopantetheine adenylyltransferase (157 aa).

Threonine 10 contacts substrate. Residues 10 to 11 (TF) and histidine 18 contribute to the ATP site. The substrate site is built by lysine 42, leucine 74, and arginine 88. ATP contacts are provided by residues 89 to 91 (GLR), glutamate 99, and 124 to 130 (NAFISSS).

Belongs to the bacterial CoaD family. In terms of assembly, homohexamer. Requires Mg(2+) as cofactor.

The protein resides in the cytoplasm. The enzyme catalyses (R)-4'-phosphopantetheine + ATP + H(+) = 3'-dephospho-CoA + diphosphate. The protein operates within cofactor biosynthesis; coenzyme A biosynthesis; CoA from (R)-pantothenate: step 4/5. Reversibly transfers an adenylyl group from ATP to 4'-phosphopantetheine, yielding dephospho-CoA (dPCoA) and pyrophosphate. This Helicobacter acinonychis (strain Sheeba) protein is Phosphopantetheine adenylyltransferase.